The chain runs to 482 residues: MFS-type transporter traF (482 aa).

The span at 1–14 (MTSGTEQATLNTEE) shows a compositional bias: polar residues. The segment at 1–22 (MTSGTEQATLNTEENGSDSDHL) is disordered. 2 N-linked (GlcNAc...) asparagine glycosylation sites follow: Asn15 and Asn45. Transmembrane regions (helical) follow at residues 52 to 72 (VFIT…SSVM), 89 to 109 (LSIL…LLFG), 125 to 145 (VFLF…ATIF), 149 to 169 (FLCG…LADL), 176 to 196 (GIAV…GPLV), 209 to 229 (WTQW…FVFC), 275 to 295 (PILA…YLCF), 312 to 332 (IGSL…VIII), and 354 to 374 (LVPM…FAWT). Asn376 is a glycosylation site (N-linked (GlcNAc...) asparagine). 3 helical membrane-spanning segments follow: residues 379-399 (LPWA…LLIF), 427-447 (LLGA…GVPW), and 448-468 (AMSL…LFFI).

Belongs to the major facilitator superfamily. CAR1 family.

It localises to the membrane. Its function is as follows. MFS-type transporter; part of the tra gene cluster that produces terrestric acid. The clavatol biosynthesis cluster cla and the terrestric acid cluster tra are both involved in the production of peniphenones and penilactones. The protein is MFS-type transporter traF of Penicillium crustosum (Blue mold fungus).